The chain runs to 129 residues: Protein HMF1 (129 aa).

Residue Lys-52 forms a Glycyl lysine isopeptide (Lys-Gly) (interchain with G-Cter in ubiquitin) linkage.

Belongs to the RutC family.

The protein localises to the cytoplasm. It localises to the nucleus. It is found in the mitochondrion intermembrane space. The protein is Protein HMF1 (HMF1) of Saccharomyces cerevisiae (strain ATCC 204508 / S288c) (Baker's yeast).